Consider the following 573-residue polypeptide: DNA ligase (573 aa).

An ATP-binding site is contributed by glutamate 250. The active-site N6-AMP-lysine intermediate is lysine 252. 6 residues coordinate ATP: arginine 257, arginine 272, glutamate 301, phenylalanine 342, arginine 432, and lysine 438.

It belongs to the ATP-dependent DNA ligase family. Requires Mg(2+) as cofactor.

The enzyme catalyses ATP + (deoxyribonucleotide)n-3'-hydroxyl + 5'-phospho-(deoxyribonucleotide)m = (deoxyribonucleotide)n+m + AMP + diphosphate.. Functionally, DNA ligase that seals nicks in double-stranded DNA during DNA replication, DNA recombination and DNA repair. This chain is DNA ligase, found in Methanococcus maripaludis (strain C6 / ATCC BAA-1332).